The following is a 103-amino-acid chain: Histone H4 (103 aa).

The span at 1 to 14 shows a compositional bias: gly residues; the sequence is MTGRGKGGKGLGKG. A disordered region spans residues 1 to 20; it reads MTGRGKGGKGLGKGGAKRHR. 2 positions are modified to N6-acetyl-N6-methyllysine; alternate: Lys6 and Lys13. A DNA-binding region spans residues 17–21; the sequence is KRHRK.

Belongs to the histone H4 family. In terms of assembly, the nucleosome is a histone octamer containing two molecules each of H2A, H2B, H3 and H4 assembled in one H3-H4 heterotetramer and two H2A-H2B heterodimers. The octamer wraps approximately 147 bp of DNA.

It is found in the nucleus. Its subcellular location is the chromosome. Core component of nucleosome. Nucleosomes wrap and compact DNA into chromatin, limiting DNA accessibility to the cellular machineries which require DNA as a template. Histones thereby play a central role in transcription regulation, DNA repair, DNA replication and chromosomal stability. DNA accessibility is regulated via a complex set of post-translational modifications of histones, also called histone code, and nucleosome remodeling. This Trichogramma cacaeciae (Moth egg parasite) protein is Histone H4.